The chain runs to 128 residues: Large ribosomal subunit protein uL18 (128 aa).

Residues 1–36 (MAKRSSLTRRGVSPRAAARARRHMRVRKKVRGTPER) form a disordered region. Residues 18–31 (ARARRHMRVRKKVR) show a composition bias toward basic residues.

The protein belongs to the universal ribosomal protein uL18 family. In terms of assembly, part of the 50S ribosomal subunit; part of the 5S rRNA/L5/L18/L25 subcomplex. Contacts the 5S and 23S rRNAs.

Functionally, this is one of the proteins that bind and probably mediate the attachment of the 5S RNA into the large ribosomal subunit, where it forms part of the central protuberance. This chain is Large ribosomal subunit protein uL18, found in Thermobifida fusca (strain YX).